The chain runs to 168 residues: Peptide methionine sulfoxide reductase 2 (168 aa).

The MsrB domain occupies 40 to 168 (DVKWNDALTP…NSASLNLKKD (129 aa)). Positions 79, 82, 128, and 131 each coordinate Zn(2+). Cysteines 97 and 157 form a disulfide. Catalysis depends on cysteine 157, which acts as the Nucleophile.

Belongs to the MsrB Met sulfoxide reductase family. It depends on Zn(2+) as a cofactor.

The catalysed reaction is L-methionyl-[protein] + [thioredoxin]-disulfide + H2O = L-methionyl-(R)-S-oxide-[protein] + [thioredoxin]-dithiol. Functionally, methionine-R-sulfoxide reductase which catalyzes the reduction of methionine sulfoxide (MetSO) to methionine in proteins. Plays a protective role against oxidative stress by restoring activity to proteins that have been inactivated by methionine oxidation. Protects iron-sulfur clusters from oxidative inactivation along with MXR1. Involved in the regulation of lifespan. This is Peptide methionine sulfoxide reductase 2 (MXR2) from Saccharomyces cerevisiae (strain ATCC 204508 / S288c) (Baker's yeast).